Reading from the N-terminus, the 96-residue chain is Small ribosomal subunit protein bS6 (96 aa).

This sequence belongs to the bacterial ribosomal protein bS6 family.

Functionally, binds together with bS18 to 16S ribosomal RNA. This is Small ribosomal subunit protein bS6 from Bacillus cereus (strain G9842).